Here is a 399-residue protein sequence, read N- to C-terminus: Protein HYM1 (399 aa).

Residues 363–382 (VSNNNASSSNVASITSPSSV) show a composition bias toward low complexity. The segment at 363 to 399 (VSNNNASSSNVASITSPSSVMNNQSSILTHSTSPDSR) is disordered. Over residues 383-399 (MNNQSSILTHSTSPDSR) the composition is skewed to polar residues.

It belongs to the Mo25 family.

In Saccharomyces cerevisiae (strain ATCC 204508 / S288c) (Baker's yeast), this protein is Protein HYM1 (HYM1).